Consider the following 399-residue polypeptide: Elongation factor Tu (399 aa).

The region spanning 10–204 (KPHVNIGTIG…AVDASIPEPE (195 aa)) is the tr-type G domain. The segment at 19-26 (GHVDHGKT) is G1. Residue 19-26 (GHVDHGKT) coordinates GTP. Thr26 contributes to the Mg(2+) binding site. The G2 stretch occupies residues 60–64 (GITIN). The interval 81–84 (DCPG) is G3. GTP contacts are provided by residues 81–85 (DCPGH) and 136–139 (NKCD). The tract at residues 136 to 139 (NKCD) is G4. The segment at 174–176 (SGL) is G5.

This sequence belongs to the TRAFAC class translation factor GTPase superfamily. Classic translation factor GTPase family. EF-Tu/EF-1A subfamily. Monomer.

The protein resides in the cytoplasm. It catalyses the reaction GTP + H2O = GDP + phosphate + H(+). In terms of biological role, GTP hydrolase that promotes the GTP-dependent binding of aminoacyl-tRNA to the A-site of ribosomes during protein biosynthesis. This is Elongation factor Tu from Prochlorococcus marinus (strain MIT 9215).